The primary structure comprises 677 residues: Fermitin family homolog 1 (677 aa).

The FERM domain maps to 96–653; that stretch reads MLRLRLPNLK…HEYIGGYIFL (558 aa). A phosphoserine mark is found at S170, S179, and S361. Residues 337–433 form the PH domain; that stretch reads ESEVDEIEAA…EVVPNVNVAE (97 aa).

This sequence belongs to the kindlin family. In terms of assembly, interacts with the cytoplasmic domain of integrins ITGB1 and ITGB3.

The protein localises to the cytoplasm. It is found in the cytoskeleton. The protein resides in the cell junction. Its subcellular location is the focal adhesion. It localises to the cell projection. The protein localises to the ruffle membrane. In terms of biological role, involved in cell adhesion. Contributes to integrin activation. When coexpressed with talin, potentiates activation of ITGA2B. Required for normal keratinocyte proliferation. Required for normal polarization of basal keratinocytes in skin, and for normal cell shape. Required for normal adhesion of keratinocytes to fibronectin and laminin, and for normal keratinocyte migration to wound sites. This is Fermitin family homolog 1 (FERMT1) from Pongo abelii (Sumatran orangutan).